The following is a 122-amino-acid chain: Large ribosomal subunit protein uL14 (122 aa).

The protein belongs to the universal ribosomal protein uL14 family. In terms of assembly, part of the 50S ribosomal subunit. Forms a cluster with proteins L3 and L19. In the 70S ribosome, L14 and L19 interact and together make contacts with the 16S rRNA in bridges B5 and B8.

Functionally, binds to 23S rRNA. Forms part of two intersubunit bridges in the 70S ribosome. In Lactococcus lactis subsp. lactis (strain IL1403) (Streptococcus lactis), this protein is Large ribosomal subunit protein uL14.